Here is a 133-residue protein sequence, read N- to C-terminus: MQKSNIVEYKGLGRRKSSIARVKLVPGSGKVLVNDRQPENYFPNKLVIQDMMQPLVLTKTAETYDVYVKVIGGGFNGQAGAIRLGITRALIQTREDLKTDLRKAGLVTRDSRVKERKKFGLYGARRAPQFTKR.

It belongs to the universal ribosomal protein uS9 family.

This is Small ribosomal subunit protein uS9 from Ureaplasma parvum serovar 3 (strain ATCC 700970).